The primary structure comprises 194 residues: Imidazoleglycerol-phosphate dehydratase (194 aa).

This sequence belongs to the imidazoleglycerol-phosphate dehydratase family.

Its subcellular location is the cytoplasm. It carries out the reaction D-erythro-1-(imidazol-4-yl)glycerol 3-phosphate = 3-(imidazol-4-yl)-2-oxopropyl phosphate + H2O. Its pathway is amino-acid biosynthesis; L-histidine biosynthesis; L-histidine from 5-phospho-alpha-D-ribose 1-diphosphate: step 6/9. This is Imidazoleglycerol-phosphate dehydratase from Streptococcus mutans serotype c (strain ATCC 700610 / UA159).